A 76-amino-acid chain; its full sequence is Pigment-dispersing hormone A peptides (76 aa).

The N-terminal stretch at 1–20 (MRSAMVVLVLVAMVAVFTRA) is a signal peptide. Position 73 is an alanine amide (alanine 73).

This sequence belongs to the arthropod PDH family. In terms of tissue distribution, optical ganglia of the eyestalk.

The protein localises to the secreted. Functionally, the pigment-dispersing hormone causes the migration of the distal retinal pigment into the proximal end of the pigment chromatophore cells and thus decreases the amount of light entering the retinulas. May also function as a neurotransmitter and/or neuromodulator. The polypeptide is Pigment-dispersing hormone A peptides (Faxonius limosus (Spinycheek crayfish)).